Here is a 122-residue protein sequence, read N- to C-terminus: Small ribosomal subunit protein bS16 (122 aa).

Residues 85-122 (REAKNNPIKAKPGKRAQERAAEKAQKAADAAAAADAAE) form a disordered region. Over residues 99–110 (RAQERAAEKAQK) the composition is skewed to basic and acidic residues. Residues 111-122 (AADAAAAADAAE) show a composition bias toward low complexity.

Belongs to the bacterial ribosomal protein bS16 family.

This Rhizobium etli (strain ATCC 51251 / DSM 11541 / JCM 21823 / NBRC 15573 / CFN 42) protein is Small ribosomal subunit protein bS16.